The primary structure comprises 178 residues: Vegetative protein (178 aa).

Disordered stretches follow at residues 67 to 102 (AGRR…AAAG) and 138 to 158 (NRRP…DIKL). The span at 76-90 (PAARSAVTAAPAAVG) shows a compositional bias: low complexity.

The protein is Vegetative protein (vegA) of Myxococcus xanthus.